Reading from the N-terminus, the 179-residue chain is Auxin-induced protein IAA6 (179 aa).

Positions 13–17 match the EAR-like (transcriptional repression) motif; sequence LRLGL. Residues 31-52 form a disordered region; sequence FSEIDGGVEENGGSGDRKSVDK. The PB1 domain maps to 75–163; the sequence is KMYMKVSMDG…KRLRIMKRSD (89 aa).

This sequence belongs to the Aux/IAA family. As to quaternary structure, homodimers and heterodimers.

The protein localises to the nucleus. In terms of biological role, aux/IAA proteins are short-lived transcriptional factors that function as repressors of early auxin response genes at low auxin concentrations. Repression is thought to result from the interaction with auxin response factors (ARFs), proteins that bind to the auxin-responsive promoter element (AuxRE). Formation of heterodimers with ARF proteins may alter their ability to modulate early auxin response genes expression. This is Auxin-induced protein IAA6 (IAA6) from Pisum sativum (Garden pea).